The following is a 179-amino-acid chain: Large ribosomal subunit protein uL5 (179 aa).

This sequence belongs to the universal ribosomal protein uL5 family. Part of the 50S ribosomal subunit; part of the 5S rRNA/L5/L18/L25 subcomplex. Contacts the 5S rRNA and the P site tRNA. Forms a bridge to the 30S subunit in the 70S ribosome.

In terms of biological role, this is one of the proteins that bind and probably mediate the attachment of the 5S RNA into the large ribosomal subunit, where it forms part of the central protuberance. In the 70S ribosome it contacts protein S13 of the 30S subunit (bridge B1b), connecting the 2 subunits; this bridge is implicated in subunit movement. Contacts the P site tRNA; the 5S rRNA and some of its associated proteins might help stabilize positioning of ribosome-bound tRNAs. The sequence is that of Large ribosomal subunit protein uL5 from Serratia proteamaculans (strain 568).